The chain runs to 188 residues: Nicotinamide-nucleotide adenylyltransferase (188 aa).

Belongs to the archaeal NMN adenylyltransferase family.

The protein resides in the cytoplasm. The catalysed reaction is beta-nicotinamide D-ribonucleotide + ATP + H(+) = diphosphate + NAD(+). It participates in cofactor biosynthesis; NAD(+) biosynthesis; NAD(+) from nicotinamide D-ribonucleotide: step 1/1. The polypeptide is Nicotinamide-nucleotide adenylyltransferase (Pyrococcus furiosus (strain ATCC 43587 / DSM 3638 / JCM 8422 / Vc1)).